The primary structure comprises 213 residues: Peroxynitrite isomerase (213 aa).

A compositionally biased stretch (low complexity) spans 1 to 10; it reads MGADATGDTA. The tract at residues 1-26 is disordered; the sequence is MGADATGDTAARGDRAAHGDTASGGA. A GXWXGXG motif is present at residues 51–57; the sequence is GTWRGEG. Histidine 203 lines the heme b pocket.

This sequence belongs to the nitrobindin family. Homodimer. The cofactor is heme b.

It carries out the reaction peroxynitrite = nitrate. It participates in nitrogen metabolism. Heme-binding protein able to scavenge peroxynitrite and to protect free L-tyrosine against peroxynitrite-mediated nitration, by acting as a peroxynitrite isomerase that converts peroxynitrite to nitrate. Therefore, this protein likely plays a role in peroxynitrite sensing and in the detoxification of reactive nitrogen and oxygen species (RNS and ROS, respectively). Is able to bind nitric oxide (NO) in vitro, but may act as a sensor of peroxynitrite levels in vivo. This Parafrankia sp. (strain EAN1pec) protein is Peroxynitrite isomerase.